We begin with the raw amino-acid sequence, 200 residues long: Rho GDP-dissociation inhibitor 2 (200 aa).

The interval 1–39 (MTEKDAQPQLEEADDDLDSKLNYKPPPQKSLKELQEMDK) is disordered. Residue threonine 2 is modified to N-acetylthreonine. The residue at position 20 (lysine 20) is an N6-acetyllysine. Position 23 is a phosphotyrosine (tyrosine 23). N6-acetyllysine is present on residues lysine 24, lysine 39, lysine 46, lysine 101, and lysine 123. Over residues 30–39 (SLKELQEMDK) the composition is skewed to basic and acidic residues. A Phosphoserine modification is found at serine 144. Lysine 174 bears the N6-acetyllysine mark.

This sequence belongs to the Rho GDI family. As to quaternary structure, interacts with RHOA. Interacts with RAC1. Interacts with RAC2. Interacts with CDC42. In terms of tissue distribution, preferentially expressed in hematopoietic cells.

The protein localises to the cytoplasm. The protein resides in the cytosol. Functionally, regulates the GDP/GTP exchange reaction of the Rho proteins by inhibiting the dissociation of GDP from them, and the subsequent binding of GTP to them. Regulates reorganization of the actin cytoskeleton mediated by Rho family members. The polypeptide is Rho GDP-dissociation inhibitor 2 (Arhgdib) (Mus musculus (Mouse)).